The following is a 461-amino-acid chain: ATP-dependent protease ATPase subunit HslU (461 aa).

ATP-binding positions include V21, 63 to 68 (GVGKTE), D274, E339, and R411.

Belongs to the ClpX chaperone family. HslU subfamily. As to quaternary structure, a double ring-shaped homohexamer of HslV is capped on each side by a ring-shaped HslU homohexamer. The assembly of the HslU/HslV complex is dependent on binding of ATP.

Its subcellular location is the cytoplasm. In terms of biological role, ATPase subunit of a proteasome-like degradation complex; this subunit has chaperone activity. The binding of ATP and its subsequent hydrolysis by HslU are essential for unfolding of protein substrates subsequently hydrolyzed by HslV. HslU recognizes the N-terminal part of its protein substrates and unfolds these before they are guided to HslV for hydrolysis. This is ATP-dependent protease ATPase subunit HslU from Caldanaerobacter subterraneus subsp. tengcongensis (strain DSM 15242 / JCM 11007 / NBRC 100824 / MB4) (Thermoanaerobacter tengcongensis).